The sequence spans 443 residues: ATP-dependent protease ATPase subunit HslU (443 aa).

ATP contacts are provided by residues Ile-18 and 60-65 (GVGKTE). The interval 139–161 (ARDSGFDANPSEENNATRQKFRK) is disordered. ATP is bound by residues Asp-256, Glu-321, and Arg-393.

This sequence belongs to the ClpX chaperone family. HslU subfamily. In terms of assembly, a double ring-shaped homohexamer of HslV is capped on each side by a ring-shaped HslU homohexamer. The assembly of the HslU/HslV complex is dependent on binding of ATP.

The protein localises to the cytoplasm. Functionally, ATPase subunit of a proteasome-like degradation complex; this subunit has chaperone activity. The binding of ATP and its subsequent hydrolysis by HslU are essential for unfolding of protein substrates subsequently hydrolyzed by HslV. HslU recognizes the N-terminal part of its protein substrates and unfolds these before they are guided to HslV for hydrolysis. The protein is ATP-dependent protease ATPase subunit HslU of Nitrosomonas eutropha (strain DSM 101675 / C91 / Nm57).